A 318-amino-acid polypeptide reads, in one-letter code: UDP-3-O-acylglucosamine N-acyltransferase (318 aa).

Histidine 230 acts as the Proton acceptor in catalysis.

The protein belongs to the transferase hexapeptide repeat family. LpxD subfamily. As to quaternary structure, homotrimer.

The catalysed reaction is a UDP-3-O-[(3R)-3-hydroxyacyl]-alpha-D-glucosamine + a (3R)-hydroxyacyl-[ACP] = a UDP-2-N,3-O-bis[(3R)-3-hydroxyacyl]-alpha-D-glucosamine + holo-[ACP] + H(+). It participates in bacterial outer membrane biogenesis; LPS lipid A biosynthesis. Functionally, catalyzes the N-acylation of UDP-3-O-acylglucosamine using 3-hydroxyacyl-ACP as the acyl donor. Is involved in the biosynthesis of lipid A, a phosphorylated glycolipid that anchors the lipopolysaccharide to the outer membrane of the cell. This is UDP-3-O-acylglucosamine N-acyltransferase from Wolinella succinogenes (strain ATCC 29543 / DSM 1740 / CCUG 13145 / JCM 31913 / LMG 7466 / NCTC 11488 / FDC 602W) (Vibrio succinogenes).